We begin with the raw amino-acid sequence, 303 residues long: 1-phosphofructokinase (303 aa).

Residue 248–249 (GD) participates in ATP binding. Catalysis depends on aspartate 249, which acts as the Proton acceptor.

This sequence belongs to the carbohydrate kinase PfkB family.

It carries out the reaction beta-D-fructose 1-phosphate + ATP = beta-D-fructose 1,6-bisphosphate + ADP + H(+). Its function is as follows. Catalyzes the ATP-dependent phosphorylation of fructose-l-phosphate to fructose-l,6-bisphosphate. This Bacillus subtilis (strain 168) protein is 1-phosphofructokinase (fruK).